A 318-amino-acid chain; its full sequence is Aspartate carbamoyltransferase catalytic subunit (318 aa).

Positions 66 and 67 each coordinate carbamoyl phosphate. Residue K94 participates in L-aspartate binding. 3 residues coordinate carbamoyl phosphate: R116, H144, and Q147. L-aspartate contacts are provided by R177 and R231. Carbamoyl phosphate contacts are provided by G272 and P273.

This sequence belongs to the aspartate/ornithine carbamoyltransferase superfamily. ATCase family. As to quaternary structure, heterododecamer (2C3:3R2) of six catalytic PyrB chains organized as two trimers (C3), and six regulatory PyrI chains organized as three dimers (R2).

The catalysed reaction is carbamoyl phosphate + L-aspartate = N-carbamoyl-L-aspartate + phosphate + H(+). Its pathway is pyrimidine metabolism; UMP biosynthesis via de novo pathway; (S)-dihydroorotate from bicarbonate: step 2/3. In terms of biological role, catalyzes the condensation of carbamoyl phosphate and aspartate to form carbamoyl aspartate and inorganic phosphate, the committed step in the de novo pyrimidine nucleotide biosynthesis pathway. This chain is Aspartate carbamoyltransferase catalytic subunit, found in Frankia casuarinae (strain DSM 45818 / CECT 9043 / HFP020203 / CcI3).